A 309-amino-acid chain; its full sequence is Mitochondrial succinate-fumarate transporter 1 (309 aa).

3 Solcar repeats span residues 11–96 (IPPY…FQTA), 108–196 (RGRF…FDIL), and 208–298 (LQPW…VTGL). Transmembrane regions (helical) follow at residues 17–37 (AVSGSLGGVVEACCLQPIDVI), 65–85 (VRALWKGLTPFATHLTLKYTL), 111–131 (FLSGFGAGVLEALAIVTPFEV), 171–191 (GAAPTVMRNGTNQAVMFTAKN), 214–234 (MISGFLAGTAGPFCTGPFDVV), and 273–293 (GLLPRLMRIPPGQAIMWAVAD).

It belongs to the mitochondrial carrier (TC 2.A.29) family. Expressed in root tips, cotyledons, hypocotyls, leaves, trichomes, stems, flowers, carpels, anthers, pollen and abscission zone of siliques.

The protein localises to the mitochondrion inner membrane. In terms of biological role, may transport cytoplasmic succinate, derived from fatty acid oxidation, into the mitochondrial matrix in exchange of fumarate during lipid mobilization in seed germination. Conversion of seed-reserved triacylglycerols into sucrose is necessary for growth before the onset of photosynthesis and involves fatty acid beta-oxidation, the glyoxylate cycle and gluconeogenesis. The protein is Mitochondrial succinate-fumarate transporter 1 (SFC1) of Arabidopsis thaliana (Mouse-ear cress).